A 98-amino-acid polypeptide reads, in one-letter code: Bombyxin E-1 (98 aa).

Residues 1–19 (MNRPVFLVLLLTGFLCIAA) form the signal peptide. The residue at position 20 (Gln-20) is a Pyrrolidone carboxylic acid. 3 disulfides stabilise this stretch: Cys-29–Cys-85, Cys-41–Cys-98, and Cys-84–Cys-89. Residues 50-75 (SESSLASYSSRGWPWLPTPNFNKRAI) constitute a propeptide, c peptide like.

The protein belongs to the insulin family. In terms of assembly, heterodimer of a B chain and an A chain linked by two disulfide bonds.

It localises to the secreted. In terms of biological role, PTTH is a brain peptide responsible for activation of prothoracic glands to produce ecdysone in insects. The polypeptide is Bombyxin E-1 (BBXE1) (Bombyx mori (Silk moth)).